A 334-amino-acid polypeptide reads, in one-letter code: MSGFYHKHFLKLLDFTPAELNSLLQLAAKLKADKKSGKEEAKLTGKNIALIFEKDSTRTRCSFEVAAYDQGARVTYLGPSGSQIGHKESIKDTARVLGRMYDGIQYRGYGQEIVETLAEYAGVPVWNGLTNEFHPTQLLADLLTMQEHLPGKPFNEMTLVYAGDARNNMGNSMLEAAALTGLDLRLVAPQACWPEAALVTECRALAQQNGGNITLTEDVAKGVEGADFIYTDVWVSMGEAKEKWAERIALLRDYQVNSKMMQLTGNPEVKFLHCLPAFHDDQTTLGKKMAEEFGLHGGMEVTDEVFESAASIVFDQAENRMHTIKAVMVATLSK.

Carbamoyl phosphate contacts are provided by residues 56-59 (STRT), Q83, R107, and 134-137 (HPTQ). L-ornithine contacts are provided by residues N168, D232, and 236 to 237 (SM). Carbamoyl phosphate-binding positions include 274-275 (CL) and R320.

This sequence belongs to the aspartate/ornithine carbamoyltransferase superfamily. OTCase family.

Its subcellular location is the cytoplasm. The enzyme catalyses carbamoyl phosphate + L-ornithine = L-citrulline + phosphate + H(+). It functions in the pathway amino-acid biosynthesis; L-arginine biosynthesis; L-arginine from L-ornithine and carbamoyl phosphate: step 1/3. In terms of biological role, reversibly catalyzes the transfer of the carbamoyl group from carbamoyl phosphate (CP) to the N(epsilon) atom of ornithine (ORN) to produce L-citrulline. This is Ornithine carbamoyltransferase from Escherichia coli O157:H7.